The sequence spans 192 residues: Erythropoietin (192 aa).

A signal peptide spans 1-26 (MGVRECPALLLLLSLLLPPLGLPALG). 2 disulfide bridges follow: C33–C187 and C55–C59. N50 is a glycosylation site (N-linked (GlcNAc...) asparagine). 2 N-linked (GlcNAc...) asparagine glycosylation sites follow: N64 and N109.

The protein belongs to the EPO/TPO family.

The protein resides in the secreted. Its function is as follows. Hormone involved in the regulation of erythrocyte proliferation and differentiation and the maintenance of a physiological level of circulating erythrocyte mass. Binds to EPOR leading to EPOR dimerization and JAK2 activation thereby activating specific downstream effectors, including STAT1 and STAT3. In Equus caballus (Horse), this protein is Erythropoietin (EPO).